The primary structure comprises 301 residues: 4-diphosphocytidyl-2-C-methyl-D-erythritol kinase (301 aa).

The active site involves Lys18. 103 to 113 (PVAAGIGGGSA) is an ATP binding site. Asp145 is an active-site residue.

The protein belongs to the GHMP kinase family. IspE subfamily.

The enzyme catalyses 4-CDP-2-C-methyl-D-erythritol + ATP = 4-CDP-2-C-methyl-D-erythritol 2-phosphate + ADP + H(+). It functions in the pathway isoprenoid biosynthesis; isopentenyl diphosphate biosynthesis via DXP pathway; isopentenyl diphosphate from 1-deoxy-D-xylulose 5-phosphate: step 3/6. Functionally, catalyzes the phosphorylation of the position 2 hydroxy group of 4-diphosphocytidyl-2C-methyl-D-erythritol. This Bradyrhizobium sp. (strain BTAi1 / ATCC BAA-1182) protein is 4-diphosphocytidyl-2-C-methyl-D-erythritol kinase.